The primary structure comprises 377 residues: DNA replication and repair protein RecF (377 aa).

30–37 (GPNGVGKT) is an ATP binding site.

Belongs to the RecF family.

It localises to the cytoplasm. Functionally, the RecF protein is involved in DNA metabolism; it is required for DNA replication and normal SOS inducibility. RecF binds preferentially to single-stranded, linear DNA. It also seems to bind ATP. The polypeptide is DNA replication and repair protein RecF (Salinispora tropica (strain ATCC BAA-916 / DSM 44818 / JCM 13857 / NBRC 105044 / CNB-440)).